The following is an 856-amino-acid chain: Dynamin-1 (856 aa).

One can recognise a Dynamin-type G domain in the interval 28–294 (DLDLPQIAVV…LTNHIRDTLP (267 aa)). Positions 38-45 (GGQSAGKS) are G1 motif. GDP-binding residues include S41, G43, K44, S45, S46, R59, and G60. The G2 motif stretch occupies residues 64-66 (VTR). Y80 carries the phosphotyrosine modification. Y125 carries the 3'-nitrotyrosine; alternate modification. Y125 is modified (phosphotyrosine; alternate). The interval 136-139 (DLPG) is G3 motif. The interval 205–208 (TKLD) is G4 motif. 6 residues coordinate GDP: K206, D208, D211, N236, R237, and Q239. A G5 motif region spans residues 235–238 (VNRS). S306 and S347 each carry phosphoserine. Y354 carries the phosphotyrosine modification. At S512 the chain carries Phosphoserine. A PH domain is found at 519–625 (LVIRKGWLTI…WKASFLRAGV (107 aa)). The 92-residue stretch at 659 to 750 (VETIRNLVDS…IIGDINTTTV (92 aa)) folds into the GED domain. Residues 750–856 (VSTPMPPPVD…PIGSGKSIPS (107 aa)) form a disordered region. The segment covering 763 to 781 (LQVQSVPTGRRSPTSSPTP) has biased composition (polar residues). Phosphoserine occurs at positions 774 and 778. R796 carries the omega-N-methylarginine modification. The residue at position 822 (S822) is a Phosphoserine. Residues 825–844 (PFGPPPQVPSRPNRAPPGVP) are compositionally biased toward pro residues.

Belongs to the TRAFAC class dynamin-like GTPase superfamily. Dynamin/Fzo/YdjA family. In terms of assembly, homodimer; homodimerization is mediated by the dynamin-type G domain which promotes assembly-stimulated GTPase activity. Homo-tetramer formed from two dimers in the absence of lipid. Oligomerizes into a helical polymer that self-assembles around the vesicle membrane, when associated to the menbrane through lipid binding. Interacts (via C-terminal proline-rich domain (PRD)) with SNX9 (via SH3 domain); this interaction allows regulation of DNM1 self-assembly during late stages of endocytic vesicle formation and supports DNM1's early functions in accelerating clathrin-coated pits (CCPs) maturation in non neuronals cell. Interacts (via C-terminal proline-rich domain (PRD)) with MYO1E (via SH3 domain); this interaction regulates receptor-mediated endocytosis. Interacts with SNX33 (via SH3 domain); this interaction decreases DNM1-dependent endocytosis. Interacts with DIAPH1. Interacts with GRB2 (via SH3 domain); this interaction mediates disassembly of DNM1 polymers, therefore modulates self-assembly. Forms a complex with BIN1 (via SH3 domain) and SH3GL2 (via SH3 domain). Forms a complex with SH3GL2 (via SH3 domain) and AMPH (via SH3 domain). Forms a complex with SH3GL2 (via SH3 domain) and SYNJ1. Interacts with AMPH. Interacts (via C-terminal proline-rich domain (PRD)) with SYT1; this interaction facilitates vesicle fission during clathrin-mediated endocytosis (CME). Interacts (via C-terminal proline-rich domain (PRD)) with PLCG1 (via SH3 domain); this interaction stimulates the release of GDP from DNM1 and enhances DNM1-dependent endocytosis. Interacts with SNPH; this interaction inhibits the binding of DNM1 to AMPH and DNM1-receptor-mediated endocytosis. Interacts with CAV1. Interacts with SH3GLB1 (via SH3 domain). Interacts with PACSIN1 (via SH3 domain), PACSIN2 (via SH3 domain) and PACSIN3 (via SH3 domain). Interacts with UNC119; this interaction decreases DNM1's GTPase activity and affects DNM1's interaction with AMPH. Interacts with AMPH. Interacts (GTP-bound form) with DNAJC6; this interaction allows clathrin-coated vesicle (CCV) formation at the plasma membrane. Phosphorylation at Ser-774 by GSK3B/GSK3-beta leads to inactivation of receptor-mediated endocytosis in non-neuronal cells. Dephosphorylation at Ser-774, through the EGFR downstream signaling, leads to activation and regulates early stages of clathrin-mediated endocytosis (CME).

Its subcellular location is the cell membrane. The protein localises to the membrane. The protein resides in the clathrin-coated pit. It is found in the cytoplasmic vesicle. It localises to the presynapse. Its subcellular location is the secretory vesicle. The protein localises to the chromaffin granule. It catalyses the reaction GTP + H2O = GDP + phosphate + H(+). Its function is as follows. Catalyzes the hydrolysis of GTP and utilizes this energy to mediate vesicle scission and participates in many forms of endocytosis, such as clathrin-mediated endocytosis or synaptic vesicle endocytosis as well as rapid endocytosis (RE). Associates to the membrane, through lipid binding, and self-assembles into rings and stacks of interconnected rings through oligomerization to form a helical polymer around the vesicle membrane leading to constriction of invaginated coated pits around their necks. Self-assembly of the helical polymer induces membrane tubules narrowing until the polymer reaches a length sufficient to trigger GTP hydrolysis. Depending on the curvature imposed on the tubules, membrane detachment from the helical polymer upon GTP hydrolysis can cause spontaneous hemifission followed by complete fission. May play a role in regulating early stages of clathrin-mediated endocytosis in non-neuronal cells through its activation by dephosphorylation via the signaling downstream of EGFR. Controls vesicle size at a step before fission, during formation of membrane pits, at hippocampal synapses. Controls plastic adaptation of the synaptic vesicle recycling machinery to high levels of activity. Mediates rapid endocytosis (RE), a Ca(2+)-dependent and clathrin- and K(+)-independent process in chromaffin cells. Microtubule-associated force-producing protein involved in producing microtubule bundles and able to bind and hydrolyze GTP. Through its interaction with DNAJC6, acts during the early steps of clathrin-coated vesicle (CCV) formation. In Bos taurus (Bovine), this protein is Dynamin-1.